A 347-amino-acid polypeptide reads, in one-letter code: MKDENSISFLSSNENYLYDKSENELRPKVFEDFKGQVNVKETLSIFIRASKERDEALDHVFLSGPPGLGKTTLASIIAFEMNASIKITSAPAFDKPKDIIGILTGLDEKSVLFIDEIHRLRPIIEEMLCIAMEDYELDWVIGQGANARTVRMPLPKFTLIGATTKPGKVTSPLYARFGITARFELYSEIELVEIIKRNSLILNIEIEEDAAFLLARSSRGTPRIANRLLRRIRDIAQVTGSLVITSDIVSIGLEMLRIDGEGLDEQDRNILRSLILKFNGGPVGVDTLAISVGETADSLEDFYEPYLIMKGFISRTHRGRKATEFAYLHLNLEMKEDGLNENQRVSF.

Residues 1–186 form a large ATPase domain (RuvB-L) region; that stretch reads MKDENSISFL…FGITARFELY (186 aa). Residues L25, R26, G67, K70, T71, T72, 133 to 135, R176, Y186, and R223 each bind ATP; that span reads EDY. T71 contacts Mg(2+). Residues 187-257 are small ATPAse domain (RuvB-S); the sequence is SEIELVEIIK…IVSIGLEMLR (71 aa). The interval 260–347 is head domain (RuvB-H); it reads GEGLDEQDRN…GLNENQRVSF (88 aa). DNA-binding residues include R315 and R320.

It belongs to the RuvB family. Homohexamer. Forms an RuvA(8)-RuvB(12)-Holliday junction (HJ) complex. HJ DNA is sandwiched between 2 RuvA tetramers; dsDNA enters through RuvA and exits via RuvB. An RuvB hexamer assembles on each DNA strand where it exits the tetramer. Each RuvB hexamer is contacted by two RuvA subunits (via domain III) on 2 adjacent RuvB subunits; this complex drives branch migration. In the full resolvosome a probable DNA-RuvA(4)-RuvB(12)-RuvC(2) complex forms which resolves the HJ.

The protein resides in the cytoplasm. It catalyses the reaction ATP + H2O = ADP + phosphate + H(+). Its function is as follows. The RuvA-RuvB-RuvC complex processes Holliday junction (HJ) DNA during genetic recombination and DNA repair, while the RuvA-RuvB complex plays an important role in the rescue of blocked DNA replication forks via replication fork reversal (RFR). RuvA specifically binds to HJ cruciform DNA, conferring on it an open structure. The RuvB hexamer acts as an ATP-dependent pump, pulling dsDNA into and through the RuvAB complex. RuvB forms 2 homohexamers on either side of HJ DNA bound by 1 or 2 RuvA tetramers; 4 subunits per hexamer contact DNA at a time. Coordinated motions by a converter formed by DNA-disengaged RuvB subunits stimulates ATP hydrolysis and nucleotide exchange. Immobilization of the converter enables RuvB to convert the ATP-contained energy into a lever motion, pulling 2 nucleotides of DNA out of the RuvA tetramer per ATP hydrolyzed, thus driving DNA branch migration. The RuvB motors rotate together with the DNA substrate, which together with the progressing nucleotide cycle form the mechanistic basis for DNA recombination by continuous HJ branch migration. Branch migration allows RuvC to scan DNA until it finds its consensus sequence, where it cleaves and resolves cruciform DNA. The polypeptide is Holliday junction branch migration complex subunit RuvB (Borreliella burgdorferi (strain ATCC 35210 / DSM 4680 / CIP 102532 / B31) (Borrelia burgdorferi)).